Reading from the N-terminus, the 231-residue chain is NADH-ubiquinone oxidoreductase chain 4 (231 aa).

The next 6 membrane-spanning stretches (helical) occupy residues 1–21 (PIAGSMVLAAILLKLGGYGII), 34–54 (MFLPFVVLALWGAILANLTCL), 63–85 (IAYSSISHMGLVVAAIIIQTPWG), 89–111 (AMALMIAHGFTSSALFCLANTTY), 128–148 (ILPMATTWWLLTNLMNIAVPP), and 156–176 (LLIMSALFNWCPTTIIMLGLS).

Belongs to the complex I subunit 4 family.

The protein resides in the mitochondrion membrane. The catalysed reaction is a ubiquinone + NADH + 5 H(+)(in) = a ubiquinol + NAD(+) + 4 H(+)(out). Functionally, core subunit of the mitochondrial membrane respiratory chain NADH dehydrogenase (Complex I) that is believed to belong to the minimal assembly required for catalysis. Complex I functions in the transfer of electrons from NADH to the respiratory chain. The immediate electron acceptor for the enzyme is believed to be ubiquinone. In Agkistrodon contortrix contortrix (Southern copperhead), this protein is NADH-ubiquinone oxidoreductase chain 4 (MT-ND4).